A 238-amino-acid chain; its full sequence is MPLKDLPLDAQPREKLLARGPAALSDAELLAILLRTGLAGKGVLQLAQELLDDPVRDSATGRSAGGGFGGIAGLLHASSQDLQRIKGLGPAKRAELMAVLELARRALAQQLREREVFDSPQAVQHYLQLHLAGRTHEVFAVLFLDSGNRLIAMEELFRGTLTQTSVYPREVVLRALHHHAAAVVLAHNHPSGSVQPSRADEALTQTLKAALALVDVRVLDHVIVAPGAALSMAEQGLV.

Residues 116 to 238 form the MPN domain; that stretch reads VFDSPQAVQH…ALSMAEQGLV (123 aa). Residues His187, His189, and Asp200 each contribute to the Zn(2+) site. The short motif at 187–200 is the JAMM motif element; that stretch reads HNHPSGSVQPSRAD.

This sequence belongs to the UPF0758 family.

In Acidovorax sp. (strain JS42), this protein is UPF0758 protein Ajs_3450.